Here is a 306-residue protein sequence, read N- to C-terminus: Ribonuclease Z (306 aa).

Positions 63, 65, 67, 68, 141, 211, and 269 each coordinate Zn(2+). The active-site Proton acceptor is the aspartate 67.

Belongs to the RNase Z family. As to quaternary structure, homodimer. Zn(2+) is required as a cofactor.

The enzyme catalyses Endonucleolytic cleavage of RNA, removing extra 3' nucleotides from tRNA precursor, generating 3' termini of tRNAs. A 3'-hydroxy group is left at the tRNA terminus and a 5'-phosphoryl group is left at the trailer molecule.. Its function is as follows. Zinc phosphodiesterase, which displays some tRNA 3'-processing endonuclease activity. Probably involved in tRNA maturation, by removing a 3'-trailer from precursor tRNA. The chain is Ribonuclease Z from Staphylococcus aureus (strain USA300).